The following is a 482-amino-acid chain: Glycogen synthase (482 aa).

Lysine 15 lines the ADP-alpha-D-glucose pocket.

The protein belongs to the glycosyltransferase 1 family. Bacterial/plant glycogen synthase subfamily.

It carries out the reaction [(1-&gt;4)-alpha-D-glucosyl](n) + ADP-alpha-D-glucose = [(1-&gt;4)-alpha-D-glucosyl](n+1) + ADP + H(+). Its pathway is glycan biosynthesis; glycogen biosynthesis. Its function is as follows. Synthesizes alpha-1,4-glucan chains using ADP-glucose. The chain is Glycogen synthase from Hydrogenobaculum sp. (strain Y04AAS1).